The sequence spans 143 residues: NADH-quinone oxidoreductase subunit A (143 aa).

Transmembrane regions (helical) follow at residues 12–32 (YIVG…FLGG), 61–81 (FYLI…LYIW), and 90–110 (WIGF…LIYA).

This sequence belongs to the complex I subunit 3 family. In terms of assembly, NDH-1 is composed of 13 different subunits. Subunits NuoA, H, J, K, L, M, N constitute the membrane sector of the complex.

Its subcellular location is the cell inner membrane. The catalysed reaction is a quinone + NADH + 5 H(+)(in) = a quinol + NAD(+) + 4 H(+)(out). Functionally, NDH-1 shuttles electrons from NADH, via FMN and iron-sulfur (Fe-S) centers, to quinones in the respiratory chain. The immediate electron acceptor for the enzyme in this species is believed to be ubiquinone. Couples the redox reaction to proton translocation (for every two electrons transferred, four hydrogen ions are translocated across the cytoplasmic membrane), and thus conserves the redox energy in a proton gradient. This chain is NADH-quinone oxidoreductase subunit A, found in Blochmanniella floridana.